Consider the following 316-residue polypeptide: Probable cell division protein WhiA (316 aa).

The H-T-H motif DNA-binding region spans 275–309; it reads TLKELGEMVSGGKISKSGINHRLRKIDEIAEKLRA.

The protein belongs to the WhiA family.

Functionally, involved in cell division and chromosome segregation. This chain is Probable cell division protein WhiA, found in Bacillus cereus (strain B4264).